A 369-amino-acid polypeptide reads, in one-letter code: Anhydro-N-acetylmuramic acid kinase (369 aa).

12–19 (GTSLDGVD) lines the ATP pocket.

It belongs to the anhydro-N-acetylmuramic acid kinase family.

It carries out the reaction 1,6-anhydro-N-acetyl-beta-muramate + ATP + H2O = N-acetyl-D-muramate 6-phosphate + ADP + H(+). Its pathway is amino-sugar metabolism; 1,6-anhydro-N-acetylmuramate degradation. The protein operates within cell wall biogenesis; peptidoglycan recycling. In terms of biological role, catalyzes the specific phosphorylation of 1,6-anhydro-N-acetylmuramic acid (anhMurNAc) with the simultaneous cleavage of the 1,6-anhydro ring, generating MurNAc-6-P. Is required for the utilization of anhMurNAc either imported from the medium or derived from its own cell wall murein, and thus plays a role in cell wall recycling. This chain is Anhydro-N-acetylmuramic acid kinase, found in Actinobacillus pleuropneumoniae serotype 7 (strain AP76).